Here is a 608-residue protein sequence, read N- to C-terminus: Glutamine--fructose-6-phosphate aminotransferase [isomerizing] (608 aa).

The Nucleophile; for GATase activity role is filled by Cys2. In terms of domain architecture, Glutamine amidotransferase type-2 spans 2–217 (CGIVGIVGNQ…DGDWAVIGKT (216 aa)). SIS domains are found at residues 281 to 422 (ISDA…ARGT) and 456 to 598 (LSRE…VDQP). The active-site For Fru-6P isomerization activity is the Lys603.

The protein resides in the cytoplasm. It carries out the reaction D-fructose 6-phosphate + L-glutamine = D-glucosamine 6-phosphate + L-glutamate. Its function is as follows. Involved in the production of the root hair deformation (HAD) factor specifically on medicago. The protein is Glutamine--fructose-6-phosphate aminotransferase [isomerizing] (nodM) of Rhizobium meliloti (strain 1021) (Ensifer meliloti).